The sequence spans 329 residues: Adenylate isopentenyltransferase (329 aa).

ATP contacts are provided by residues 37–44 (GATGTGKS), Lys-63, Thr-74, 129–131 (SNS), 220–222 (KAI), and Lys-313.

The protein belongs to the IPP transferase family. The cofactor is Mg(2+). In terms of tissue distribution, expressed in roots, stems, leaves and cones.

The catalysed reaction is dimethylallyl diphosphate + AMP = N(6)-(dimethylallyl)adenosine 5'-phosphate + diphosphate. It catalyses the reaction dimethylallyl diphosphate + ADP = N(6)-(dimethylallyl)adenosine 5'-diphosphate + diphosphate. The enzyme catalyses dimethylallyl diphosphate + ATP = N(6)-(dimethylallyl)adenosine 5'-triphosphate + diphosphate. Involved in cytokinin biosynthesis. Catalyzes the transfer of an isopentenyl group from dimethylallyl diphosphate (DMAPP) to ATP, ADP and AMP. GMP, IMP, CMP or UMP are not used as substrates. The chain is Adenylate isopentenyltransferase from Humulus lupulus (European hop).